The sequence spans 528 residues: Putative galacturonosyltransferase 2 (528 aa).

It belongs to the glycosyltransferase 8 family.

The protein operates within glycan metabolism; pectin biosynthesis. In terms of biological role, may be involved in pectin and/or xylans biosynthesis in cell walls. The sequence is that of Putative galacturonosyltransferase 2 (GAUT2) from Arabidopsis thaliana (Mouse-ear cress).